A 227-amino-acid chain; its full sequence is Cytochrome c oxidase subunit 2 (227 aa).

At 1 to 14 the chain is on the mitochondrial intermembrane side; it reads MAYPFQLGFQDATS. A helical transmembrane segment spans residues 15-45; that stretch reads PIMEELLHFHDHTLMIVFLISSLVLYIITLM. The Mitochondrial matrix segment spans residues 46-59; the sequence is LTTKLTHTSTMDAQ. Residues 60 to 87 traverse the membrane as a helical segment; sequence EVETVWTILPAIILILIALPSLRILYMM. The Mitochondrial intermembrane segment spans residues 88–227; sequence DEVNNPSLTV…IFEKWSASML (140 aa). Cu cation is bound by residues H161, C196, E198, C200, H204, and M207. E198 is a binding site for Mg(2+).

The protein belongs to the cytochrome c oxidase subunit 2 family. In terms of assembly, component of the cytochrome c oxidase (complex IV, CIV), a multisubunit enzyme composed of 14 subunits. The complex is composed of a catalytic core of 3 subunits MT-CO1, MT-CO2 and MT-CO3, encoded in the mitochondrial DNA, and 11 supernumerary subunits COX4I, COX5A, COX5B, COX6A, COX6B, COX6C, COX7A, COX7B, COX7C, COX8 and NDUFA4, which are encoded in the nuclear genome. The complex exists as a monomer or a dimer and forms supercomplexes (SCs) in the inner mitochondrial membrane with NADH-ubiquinone oxidoreductase (complex I, CI) and ubiquinol-cytochrome c oxidoreductase (cytochrome b-c1 complex, complex III, CIII), resulting in different assemblies (supercomplex SCI(1)III(2)IV(1) and megacomplex MCI(2)III(2)IV(2)). Found in a complex with TMEM177, COA6, COX18, COX20, SCO1 and SCO2. Interacts with TMEM177 in a COX20-dependent manner. Interacts with COX20. Interacts with COX16. It depends on Cu cation as a cofactor.

It is found in the mitochondrion inner membrane. The catalysed reaction is 4 Fe(II)-[cytochrome c] + O2 + 8 H(+)(in) = 4 Fe(III)-[cytochrome c] + 2 H2O + 4 H(+)(out). In terms of biological role, component of the cytochrome c oxidase, the last enzyme in the mitochondrial electron transport chain which drives oxidative phosphorylation. The respiratory chain contains 3 multisubunit complexes succinate dehydrogenase (complex II, CII), ubiquinol-cytochrome c oxidoreductase (cytochrome b-c1 complex, complex III, CIII) and cytochrome c oxidase (complex IV, CIV), that cooperate to transfer electrons derived from NADH and succinate to molecular oxygen, creating an electrochemical gradient over the inner membrane that drives transmembrane transport and the ATP synthase. Cytochrome c oxidase is the component of the respiratory chain that catalyzes the reduction of oxygen to water. Electrons originating from reduced cytochrome c in the intermembrane space (IMS) are transferred via the dinuclear copper A center (CU(A)) of subunit 2 and heme A of subunit 1 to the active site in subunit 1, a binuclear center (BNC) formed by heme A3 and copper B (CU(B)). The BNC reduces molecular oxygen to 2 water molecules using 4 electrons from cytochrome c in the IMS and 4 protons from the mitochondrial matrix. In Balaenoptera borealis (Sei whale), this protein is Cytochrome c oxidase subunit 2 (MT-CO2).